A 317-amino-acid polypeptide reads, in one-letter code: GTP cyclohydrolase MptA (317 aa).

It belongs to the GTP cyclohydrolase IV family. As to quaternary structure, homodimer. Fe(2+) serves as cofactor.

The enzyme catalyses GTP + H2O = 7,8-dihydroneopterin 2',3'-cyclic phosphate + formate + diphosphate + H(+). Its pathway is cofactor biosynthesis; 5,6,7,8-tetrahydromethanopterin biosynthesis. In terms of biological role, converts GTP to 7,8-dihydro-D-neopterin 2',3'-cyclic phosphate, the first intermediate in the biosynthesis of coenzyme methanopterin. This Methanococcoides burtonii (strain DSM 6242 / NBRC 107633 / OCM 468 / ACE-M) protein is GTP cyclohydrolase MptA.